The sequence spans 403 residues: MDHLSNLPDELLCHIMSFLTTKEAALISVLSKRWRNLIAFVPNLDIFDCDILHWEVRKEERDDIRQLFMDFVDRVLALQGNSPLKKFSLCCGGGSYSDRVDCWIQNVMVRGVSELDLSMIFDTSYHMYPQVFENKKLNFEIFLRALPALEELVMNHIYWKELDVNVHVSVSSASLKTLTIKCIVCLHTKSFDTPSLAYLSYSDYAMGDYPVAKMENLFEARISLFVPEDDISRLMNSIRNVRYLYFSRDTLEVLSLCCESMPVFKNLKSLSIKSVESRGWQAMPVLLRNCPHLETLVLEALLHHVTDKCGDACACVSREEKGRSLKSCPVKVLEIKEFQGTMKEMHMIKHFLDYLPCLKEMKISYMKKNDHTTQFRVIPQVIAEMVEHYNKLSNCNVQLVVSG.

In terms of domain architecture, F-box spans 1–47; sequence MDHLSNLPDELLCHIMSFLTTKEAALISVLSKRWRNLIAFVPNLDIF. 6 LRR repeats span residues 64 to 91, 93 to 119, 131 to 156, 175 to 203, 243 to 274, and 275 to 300; these read IRQLFMDFVDRVLALQGNSPLKKFSLCC, GGSYSDRVDCWIQNVMVRGVSELDLSM, VFENKKLNFEIFLRALPALEELVMNH, LKTLTIKCIVCLHTKSFDTPSLAYLSYSD, YLYFSRDTLEVLSLCCESMPVFKNLKSLSIKS, and VESRGWQAMPVLLRNCPHLETLVLEA.

The polypeptide is Putative F-box/LRR-repeat protein At5g38386 (Arabidopsis thaliana (Mouse-ear cress)).